We begin with the raw amino-acid sequence, 200 residues long: uncharacterized protein (200 aa).

Disordered stretches follow at residues 1–27 (MTDTRREQEKDERRKLQEQSRQNEAET), 42–79 (IPKEAKGNEPLLENYKSGLQETRKELETTPDATKSTNA), and 169–200 (HGRAGIVRNPQAAQHQRQRQMEKTGAGREHGR). Residues 187 to 200 (RQMEKTGAGREHGR) show a composition bias toward basic and acidic residues.

This is an uncharacterized protein from Shigella flexneri.